The following is a 485-amino-acid chain: Pyruvate kinase (485 aa).

R33 contacts substrate. K(+) is bound by residues N35, S37, D67, and T68. 35 to 38 (NFSH) is a binding site for ATP. ATP is bound by residues R74 and K155. E221 provides a ligand contact to Mg(2+). The substrate site is built by G244, D245, and T277. D245 lines the Mg(2+) pocket.

This sequence belongs to the pyruvate kinase family. As to quaternary structure, homotetramer. It depends on Mg(2+) as a cofactor. Requires K(+) as cofactor.

It carries out the reaction pyruvate + ATP = phosphoenolpyruvate + ADP + H(+). Its pathway is carbohydrate degradation; glycolysis; pyruvate from D-glyceraldehyde 3-phosphate: step 5/5. The chain is Pyruvate kinase (pyk) from Chlamydia trachomatis serovar L2 (strain ATCC VR-902B / DSM 19102 / 434/Bu).